The following is a 391-amino-acid chain: DNA/RNA-binding protein KIN17 (391 aa).

A C2H2-type zinc finger spans residues 28–50 (CQMCQKQCRDENGFKCHCMSESH). A winged helix-turn-helix (wHTH) region spans residues 51-160 (QRQLLLASEN…RQLELEKKKK (110 aa)). Lys-135 bears the N6,N6,N6-trimethyllysine; by METTL22; alternate mark. Lys-135 is subject to N6-methyllysine; alternate. Coiled coils occupy residues 147–180 (ETIRRQLELEKKKKQDLDDEEKTAKFIEEQVRRG) and 252–275 (AKKKKSALDEIMELEEEKKRTART). A disordered region spans residues 206 to 258 (NLNKGAGGSAGATTSKSSSLGPSALKLLGSAASGKRKESSQSSAQPAKKKKSA). Residues 282–332 (GIVVKIITKKLGEKYHKKKGVVKEVIDRYTAVVKMTDSGDRLKLDQTHLET) form a C-terminal subdomain A region. A C-terminal subdomain B region spans residues 338–389 (GKRVLVLNGGYRGNEGTLESINEKAFSATIVIETGPLKGRRVEGIQYEDISK).

The protein belongs to the KIN17 family. In terms of assembly, associated with DNA polymerase alpha, RFC1 and cyclin A, in multiprotein DNA replication complexes. Also associates with replication origins at the G1/S phase boundary and throughout the S phase in vivo. As to expression, highly expressed in transformed mouse AtT20 neuroendocrine cells. Expressed at a lower level in testis, kidney, skeletal muscle, liver, lung, spleen, brain and heart and kidney. In testis, expressed at much higher levels in proliferating cells than in differentiating cells. Not detected in embryo.

It is found in the nucleus. The protein localises to the cytoplasm. In terms of biological role, involved in DNA replication and the cellular response to DNA damage. May participate in DNA replication factories and create a bridge between DNA replication and repair mediated by high molecular weight complexes. May play a role in illegitimate recombination and regulation of gene expression. May participate in mRNA processing. Binds, in vitro, to double-stranded DNA. Also shown to bind preferentially to curved DNA in vitro and in vivo. Binds via its C-terminal domain to RNA in vitro. The protein is DNA/RNA-binding protein KIN17 of Mus musculus (Mouse).